A 967-amino-acid polypeptide reads, in one-letter code: Glutamate receptor 2.6 (967 aa).

Positions 1–31 are cleaved as a signal peptide; that stretch reads MSLFNHLLSRALPLWLLFFINFLVLLGKSQQ. Over 32–590 the chain is Extracellular; the sequence is EVLQVQVGIV…WVFLKPLTRE (559 aa). Residues Asn-45, Asn-57, Asn-121, Asn-336, Asn-345, Asn-424, and Asn-550 are each glycosylated (N-linked (GlcNAc...) asparagine). The chain crosses the membrane as a helical span at residues 591 to 611; the sequence is LWFLTAASFLYIGIMVWIFEY. Residues 612 to 621 are Cytoplasmic-facing; sequence QASGDFRKQS. Residues 622–642 traverse the membrane as a helical segment; that stretch reads IINKISNVFYFSFSTLFFAHM. At 643–651 the chain is on the cytoplasmic side; that stretch reads RPSESIFTR. The chain crosses the membrane as a helical span at residues 652 to 672; that stretch reads VLVVVWCFVLLILTQSYTATL. The Extracellular segment spans residues 673 to 832; that stretch reads TSMLTVQELR…DSPIRLDHHS (160 aa). Residue Asn-795 is glycosylated (N-linked (GlcNAc...) asparagine). The chain crosses the membrane as a helical span at residues 833–853; the sequence is FEALFTIVFVVSMLLLLAMLV. The Cytoplasmic portion of the chain corresponds to 854–967; it reads CRRYRQESKS…AALFSRIKSA (114 aa). A compositionally biased stretch (polar residues) spans 864–874; that stretch reads GEINANNSPTD. The tract at residues 864 to 913 is disordered; it reads GEINANNSPTDGNMRAPPNQPTDDNMRAPTSPPIDDQVLEPPGPALNEAD.

Belongs to the glutamate-gated ion channel (TC 1.A.10.1) family. As to quaternary structure, may form heteromers. As to expression, expressed predominantly in roots.

The protein localises to the membrane. Functionally, glutamate-gated receptor that probably acts as a non-selective cation channel. May be involved in light-signal transduction and calcium homeostasis via the regulation of calcium influx into cells. The sequence is that of Glutamate receptor 2.6 (GLR2.6) from Arabidopsis thaliana (Mouse-ear cress).